Consider the following 321-residue polypeptide: Protease HtpX homolog (321 aa).

2 consecutive transmembrane segments (helical) span residues 6–26 and 28–48; these read TAML…LIGG and GGMM…YWNS. Histidine 130 provides a ligand contact to Zn(2+). Glutamate 131 is a catalytic residue. Zn(2+) is bound at residue histidine 134. 2 consecutive transmembrane segments (helical) span residues 145–165 and 173–193; these read ITAT…FFGG and PLGF…AMLV. Zn(2+) is bound at residue glutamate 202. The interval 281 to 321 is disordered; that stretch reads EFSPRASTPPPSGDRPVRKSGSVPTTGWRRGNENERKGPWS. The span at 310-321 shows a compositional bias: basic and acidic residues; that stretch reads RGNENERKGPWS.

This sequence belongs to the peptidase M48B family. Zn(2+) is required as a cofactor.

The protein localises to the cell inner membrane. The sequence is that of Protease HtpX homolog from Agrobacterium fabrum (strain C58 / ATCC 33970) (Agrobacterium tumefaciens (strain C58)).